The sequence spans 276 residues: Chlorophyll a-b binding protein CP29.3, chloroplastic (276 aa).

A chloroplast-targeting transit peptide spans 1–29 (MATTTAAAASGIFGIRIQDPRPGTGRVQA). The tract at residues 1–53 (MATTTAAAASGIFGIRIQDPRPGTGRVQARFGFSFGKKKPAPPPKKSRQVQDD) is disordered. Over residues 36 to 48 (GKKKPAPPPKKSR) the composition is skewed to basic residues. Residue Trp59 coordinates chlorophyll b. The chlorophyll a site is built by Phe79, Glu141, and His144. The chain crosses the membrane as a helical span at residues 147–167 (WAMLGTLGAIAVEALTGIAWQ). Leu181 serves as a coordination point for chlorophyll a. Residues 185-205 (LPFSLTTLIWIEVLVVGYIEF) form a helical membrane-spanning segment. Positions 204 and 207 each coordinate chlorophyll b. 4 residues coordinate chlorophyll a: Glu242, His245, Arg247, and Gln259. A helical transmembrane segment spans residues 248 to 268 (LAMVAFLIFALQAAFTGKGPV).

This sequence belongs to the light-harvesting chlorophyll a/b-binding (LHC) protein family. As to quaternary structure, the LHC complex consists of chlorophyll a-b binding proteins. Binds at least 14 chlorophylls (8 Chl-a and 6 Chl-b) and carotenoids such as lutein and neoxanthin. serves as cofactor. Photoregulated by reversible phosphorylation of its threonine residues.

The protein localises to the plastid. It is found in the chloroplast thylakoid membrane. In terms of biological role, the light-harvesting complex (LHC) functions as a light receptor, it captures and delivers excitation energy to photosystems with which it is closely associated. The protein is Chlorophyll a-b binding protein CP29.3, chloroplastic (LHCB4.3) of Arabidopsis thaliana (Mouse-ear cress).